A 1910-amino-acid chain; its full sequence is MSGEDRGAPYRYAGERPPAYPADGYASYQRGLKSSIPSRSYDTAYPEQGYDRHLRERVHPAYTTGPSYGVPPPPPTDYRRPPPQAAYRYEEDYHHRRAPAQPHLEYAPEHRRQPVHSDAYREADDRRSFEQARSDPYASPSRHAYQDSYRSELPHERRHAPAAYERISVRDDARSAPENRHIDEPAVYRRDEYDAHSREIQPSYRRGAHRSPRLSPQPVVSAHERSSEYATRDYSASAARYAEPVHQPESPPRPSMSIFNMLNDRSANGAVESVHSSPTKSSIAAEHESYPTTAQEPSHASRAAFDPAREQSYSTARDSQAYSRGSEARAGAARVNYTVHPEDEAAISQRRNSSAHQQSSIKSVRHPANAVDEPLIRVKHEEATSASLDAQMSAEPPVSHTLNNGERLSAQDAKVATEDSSLAANGNGKVDSAGGTARPAPAKTQLKLRNNPLPASKSNSSFVAPPPPAKKNRDPDGWESDLSNEENQPFWQTELDDYIFDVRERQRLIEDAFVASMREKHVEVERRLARAYEGRYFAVIRQIRLREQQEASQRDMERRQDHVRQQRDHEIDLELLGTLSDGQQNMGTRKKKGGRGTDDDGLLQADDDDDDDSDDVALADLAARNGSKSNIIKLKRSKGKPAAADPRNKKRRLENGAALSPAPGSEVDSTLADFGGNFDGDDSAFASHQASPTPDDVSFALDVDASGKVPIDARRAQQLEDAHRRIWTTIAKRDVPKVYRTVLQSASSKTMYWRRISSVVQREAKRGAARNNKTVKDVQLRARKVMREVLVFWKRNEKEERELRKKAEREALEKAKKEEEMREAKRQARKLNFLISQTELYSHFVGSKLKTAEAEESEETAGSSKIIDPNAQPSDATVLPINPHSELADAEARLAELDDIDFDDEDESNLRAHAARNAQEAVRLAKEKAQAFDVAAAEERRRNEAAAREREGLDAGPVKQIEEKDLGKAFDSDDMNFLNPTSMGQTEIKQPKMLTCQLKEYQLKGLNWLANLYEQGINGILADEMGLGKTVQSISLMAYLAEVHDIWGPFLVIAPASTLHNWQQEISKFVPTLKALPYWGNVKDRAVLRKFWNRKQISYNRDAPFHVLVTSYQLVVSDEKYFQRVKWQYMILDEAQAIKSSSSIRWKTLLGFNCRNRLLLTGTPVQNSMQELWALLHFIMPSLFDSHDEFSEWFSKDIESHAEQKGTLNEHQLRRLHMILKPFMLRRIKKNVQNELGDKIEIDVFCDLSARQKMLYRGLRANISVAELMDRATSNDEAGLKSLMNLVMQFRKVCNHPELFERADVRAPFALADFARSGSLAREGDLLNLPDSTTSLIELQVPKLLVREGGIFDIPGHNSRKGFDTGYLQNLFNIWRAPHIHESLQEERSTFASLPLIGVSPSEAQKTFHSTGIKRILAAAAEERHWRSLEAFASDDTFAAASVRPLAKMLRPMPTTSGRSPSVLMPLEEVAADYRRHSYLAKDSARAVVAPAVAPPIKLYSNDGPFMQAQERFSRDAQVSVTLFGLSPEGRESVKRVEELQSELPEVPPQGVMRDSSIDQLPYNGMQVPQMNKLIVDSSKLAKLDVLLRELKANGHRVLIYFQMTRMIDLMEEYLIYRQYKYLRLDGASKISDRRDMVTDWQTKPELFIFLLSTRAGGLGINLTAADTVIFYDHDWNPSNDSQAMDRAHRLGQTKQVTVYRLITKGTIDERIVRLARNKKEVQDIVVGTKAYSETGMAKPQEIVSLLLDDDELAESMLRKKQAEEAQTAQEKADLARASHAKRRLNKDRAAAAVESPAPVGSTWSLEDDEDDFFGARPPSKADTDTAETTPQLQSKKRSVGGGGGGSGGAKRGRISEVASPRMTPLSLDDGALMASGEQLASPSKGAAAKRKSKSHRKKTVDELAGVDLD.

3 disordered regions span residues 1–487, 548–611, and 630–673; these read MSGE…NEEN, QQEA…DDDD, and NIIK…TLAD. Basic and acidic residues predominate over residues 49 to 59; sequence GYDRHLRERVH. The span at 69-84 shows a compositional bias: pro residues; the sequence is GVPPPPPTDYRRPPPQ. Composition is skewed to basic and acidic residues over residues 118–133, 167–199, and 222–231; these read DAYREADDRRSFEQAR, ISVRDDARSAPENRHIDEPAVYRRDEYDAHSRE, and AHERSSEYAT. Polar residues-rich tracts occupy residues 257–266 and 311–320; these read SIFNMLNDRS and QSYSTARDSQ. The segment covering 321 to 334 has biased composition (low complexity); it reads AYSRGSEARAGAAR. The segment covering 349–362 has biased composition (polar residues); the sequence is QRRNSSAHQQSSIK. Basic and acidic residues-rich tracts occupy residues 374–383 and 548–572; these read PLIRVKHEEA and QQEASQRDMERRQDHVRQQRDHEID. A compositionally biased stretch (acidic residues) spans 599–611; it reads DDGLLQADDDDDD. In terms of domain architecture, DBINO spans 726 to 851; that stretch reads IWTTIAKRDV…SHFVGSKLKT (126 aa). The stretch at 790–840 forms a coiled coil; the sequence is LVFWKRNEKEERELRKKAEREALEKAKKEEEMREAKRQARKLNFLISQTEL. The interval 852 to 878 is disordered; the sequence is AEAEESEETAGSSKIIDPNAQPSDATV. Residues 1010–1182 enclose the Helicase ATP-binding domain; that stretch reads ANLYEQGING…WALLHFIMPS (173 aa). An ATP-binding site is contributed by 1023 to 1030; the sequence is DEMGLGKT. The DEAQ box motif lies at 1133 to 1136; sequence DEAQ. The region spanning 1583–1747 is the Helicase C-terminal domain; sequence KLDVLLRELK…AKPQEIVSLL (165 aa). The tract at residues 1760 to 1910 is disordered; the sequence is KKQAEEAQTA…VDELAGVDLD (151 aa). Over residues 1840–1850 the composition is skewed to gly residues; that stretch reads VGGGGGGSGGA. Basic residues predominate over residues 1888-1899; the sequence is AAKRKSKSHRKK.

The protein belongs to the SNF2/RAD54 helicase family. In terms of assembly, component of the INO80 chromatin-remodeling complex.

It localises to the nucleus. The enzyme catalyses ATP + H2O = ADP + phosphate + H(+). Functionally, ATPase component of the INO80 complex which remodels chromatin by shifting nucleosomes and is involved in DNA repair. This is Chromatin-remodeling ATPase INO80 (INO80) from Mycosarcoma maydis (Corn smut fungus).